The primary structure comprises 127 residues: Large-conductance mechanosensitive channel (127 aa).

A run of 2 helical transmembrane segments spans residues 14 to 34 (VLDL…VKSL) and 69 to 89 (GAFL…FLIV).

Belongs to the MscL family. Homopentamer.

The protein resides in the cell membrane. Channel that opens in response to stretch forces in the membrane lipid bilayer. May participate in the regulation of osmotic pressure changes within the cell. The polypeptide is Large-conductance mechanosensitive channel (Leuconostoc mesenteroides subsp. mesenteroides (strain ATCC 8293 / DSM 20343 / BCRC 11652 / CCM 1803 / JCM 6124 / NCDO 523 / NBRC 100496 / NCIMB 8023 / NCTC 12954 / NRRL B-1118 / 37Y)).